The sequence spans 215 residues: Myelin protein zero-like protein 2 (215 aa).

The first 26 residues, 1–26 (MYGKSSTRAVLLLLGIQLTALWPIAA), serve as a signal peptide directing secretion. The Ig-like V-type domain occupies 27-141 (VEIYTSRVLE…DGVIGEIRLS (115 aa)). The Extracellular segment spans residues 27–154 (VEIYTSRVLE…TVRFSEIHFL (128 aa)). Residues asparagine 39 and asparagine 118 are each glycosylated (N-linked (GlcNAc...) asparagine). The cysteines at positions 47 and 123 are disulfide-linked. Residues 155–175 (ALAIGSACALMIIIVIVVVLF) form a helical membrane-spanning segment. Residues 176–215 (QHYRKKRWAERAHKVVEIKSKEEERLNQEKKVSVYLEDTD) lie on the Cytoplasmic side of the membrane.

The protein belongs to the myelin P0 protein family. In terms of tissue distribution, widely expressed. In fetal tissues, highest expression in the inner ear. In adult tissues, highest levels in thymus and lung.

Its subcellular location is the membrane. In terms of biological role, mediates homophilic cell-cell adhesion. In Homo sapiens (Human), this protein is Myelin protein zero-like protein 2 (MPZL2).